Consider the following 204-residue polypeptide: ATP synthase subunit b 2 (204 aa).

Residues 8 to 28 form a disordered region; it reads AQSSTTEGAEAHDAAAAGEVH. A helical membrane pass occupies residues 56–76; sequence LLWLAITFGLFYLLMSKVIIP.

Belongs to the ATPase B chain family. F-type ATPases have 2 components, F(1) - the catalytic core - and F(0) - the membrane proton channel. F(1) has five subunits: alpha(3), beta(3), gamma(1), delta(1), epsilon(1). F(0) has three main subunits: a(1), b(2) and c(10-14). The alpha and beta chains form an alternating ring which encloses part of the gamma chain. F(1) is attached to F(0) by a central stalk formed by the gamma and epsilon chains, while a peripheral stalk is formed by the delta and b chains.

Its subcellular location is the cell inner membrane. In terms of biological role, f(1)F(0) ATP synthase produces ATP from ADP in the presence of a proton or sodium gradient. F-type ATPases consist of two structural domains, F(1) containing the extramembraneous catalytic core and F(0) containing the membrane proton channel, linked together by a central stalk and a peripheral stalk. During catalysis, ATP synthesis in the catalytic domain of F(1) is coupled via a rotary mechanism of the central stalk subunits to proton translocation. Component of the F(0) channel, it forms part of the peripheral stalk, linking F(1) to F(0). The b'-subunit is a diverged and duplicated form of b found in plants and photosynthetic bacteria. The sequence is that of ATP synthase subunit b 2 (atpF2) from Rhizobium meliloti (strain 1021) (Ensifer meliloti).